Consider the following 236-residue polypeptide: 3-deoxy-D-manno-octulosonic acid kinase (236 aa).

D166 is an active-site residue.

The protein belongs to the protein kinase superfamily. KdkA/RfaP family.

Its subcellular location is the cell inner membrane. The catalysed reaction is an alpha-Kdo-(2-&gt;6)-lipid IVA + ATP = a 4-O-phospho-alpha-Kdo-(2-&gt;6)-lipid IVA + ADP + H(+). It participates in bacterial outer membrane biogenesis; LPS core biosynthesis. Its function is as follows. Catalyzes the ATP-dependent phosphorylation of the 3-deoxy-D-manno-octulosonic acid (Kdo) residue in Kdo-lipid IV(A) at the 4-OH position. This Photobacterium profundum (strain SS9) protein is 3-deoxy-D-manno-octulosonic acid kinase.